A 112-amino-acid chain; its full sequence is UPF0145 protein CD630_17110 (112 aa).

This sequence belongs to the UPF0145 family.

The sequence is that of UPF0145 protein CD630_17110 from Clostridioides difficile (strain 630) (Peptoclostridium difficile).